The following is a 156-amino-acid chain: Endogenous retrovirus group K member 7 Pro protein (156 aa).

One can recognise a Peptidase A2 domain in the interval 21-96 (FEGLVDTGAD…IPLNLWGRDL (76 aa)). The active site involves D26. The region spanning 111 to 156 (YSPTSQKIMTKMGYIPGKGLGKNEDGIKVPVEAKINQEREGIGYPF) is the G-patch domain.

This sequence belongs to the peptidase A2 family. HERV class-II K(HML-2) subfamily. In terms of assembly, active as a homodimer. Autoproteolytically processed at the N-terminus. Expected C-terminal autoprocessing not detected. The sequence shown is that of the processed Pro protein.

The enzyme catalyses Processing at the authentic HIV-1 PR recognition site and release of the mature p17 matrix and the p24 capsid protein, as a result of the cleavage of the -SQNY-|-PIVQ- cleavage site.. In terms of biological role, retroviral proteases have roles in processing of the primary translation products and the maturation of the viral particle. Endogenous Pro proteins may have kept, lost or modified their original function during evolution. This endogenous protein has retained most of the characteristics of retroviral proteases. This is Endogenous retrovirus group K member 7 Pro protein (ERVK-7) from Homo sapiens (Human).